The sequence spans 62 residues: Sperm histone P2a (62 aa).

It belongs to the protamine P2 family. Post-translationally, proteolytic processing into mature chains is required for histone eviction during spermatogenesis. Transition proteins (TNP1 and TNP2) are required for processing. In terms of tissue distribution, testis.

The protein localises to the nucleus. Its subcellular location is the chromosome. Its function is as follows. Protamines substitute for histones in the chromatin of sperm during the haploid phase of spermatogenesis. They compact sperm DNA into a highly condensed, stable and inactive complex. The chain is Sperm histone P2a from Equus caballus (Horse).